A 735-amino-acid chain; its full sequence is E3 UFM1-protein ligase 1 homolog (735 aa).

Residues 389–445 (RLEAEKKKQGGAKAAVKVQEETDDWGDGKKGGKGGKKNAKSVKGGSKSSAPSTSSNL) form a disordered region. Positions 419–428 (GGKGGKKNAK) are enriched in basic residues. Residues 429-445 (SVKGGSKSSAPSTSSNL) show a composition bias toward low complexity.

Belongs to the UFL1 family.

E3 UFM1-protein ligase that mediates ufmylation of target proteins. The chain is E3 UFM1-protein ligase 1 homolog (ufl-1) from Caenorhabditis elegans.